A 298-amino-acid chain; its full sequence is Ribosomal protein L11 methyltransferase (298 aa).

Thr-152, Gly-173, Asp-195, and Asn-234 together coordinate S-adenosyl-L-methionine.

This sequence belongs to the methyltransferase superfamily. PrmA family.

The protein resides in the cytoplasm. It catalyses the reaction L-lysyl-[protein] + 3 S-adenosyl-L-methionine = N(6),N(6),N(6)-trimethyl-L-lysyl-[protein] + 3 S-adenosyl-L-homocysteine + 3 H(+). Functionally, methylates ribosomal protein L11. The polypeptide is Ribosomal protein L11 methyltransferase (Ralstonia pickettii (strain 12J)).